A 539-amino-acid chain; its full sequence is Eukaryotic translation initiation factor 3 subunit L (539 aa).

Residues 306–514 (TFSDILLYIQ…IHIADTKVSH (209 aa)) enclose the PCI domain.

This sequence belongs to the eIF-3 subunit L family. Component of the eukaryotic translation initiation factor 3 (eIF-3) complex. The eIF-3 complex interacts with pix.

The protein localises to the cytoplasm. Component of the eukaryotic translation initiation factor 3 (eIF-3) complex, which is involved in protein synthesis of a specialized repertoire of mRNAs and, together with other initiation factors, stimulates binding of mRNA and methionyl-tRNAi to the 40S ribosome. The eIF-3 complex specifically targets and initiates translation of a subset of mRNAs involved in cell proliferation. The sequence is that of Eukaryotic translation initiation factor 3 subunit L from Drosophila yakuba (Fruit fly).